The sequence spans 150 residues: Large ribosomal subunit protein bL9 (150 aa).

It belongs to the bacterial ribosomal protein bL9 family.

In terms of biological role, binds to the 23S rRNA. This chain is Large ribosomal subunit protein bL9, found in Shewanella loihica (strain ATCC BAA-1088 / PV-4).